The following is a 170-amino-acid chain: ATP synthase subunit b (170 aa).

Residues 22 to 41 traverse the membrane as a helical segment; it reads ILNWAVVVFGLYKFLPGFLG. Positions 76–98 are disordered; it reads LSSAAEKASQIKADSLKRSESIR. Positions 89–98 are enriched in basic and acidic residues; the sequence is DSLKRSESIR.

Belongs to the ATPase B chain family. As to quaternary structure, F-type ATPases have 2 components, F(1) - the catalytic core - and F(0) - the membrane proton channel. F(1) has five subunits: alpha(3), beta(3), gamma(1), delta(1), epsilon(1). F(0) has four main subunits: a(1), b(1), b'(1) and c(10-14). The alpha and beta chains form an alternating ring which encloses part of the gamma chain. F(1) is attached to F(0) by a central stalk formed by the gamma and epsilon chains, while a peripheral stalk is formed by the delta, b and b' chains.

The protein localises to the cellular thylakoid membrane. Functionally, f(1)F(0) ATP synthase produces ATP from ADP in the presence of a proton or sodium gradient. F-type ATPases consist of two structural domains, F(1) containing the extramembraneous catalytic core and F(0) containing the membrane proton channel, linked together by a central stalk and a peripheral stalk. During catalysis, ATP synthesis in the catalytic domain of F(1) is coupled via a rotary mechanism of the central stalk subunits to proton translocation. Its function is as follows. Component of the F(0) channel, it forms part of the peripheral stalk, linking F(1) to F(0). This Prochlorococcus marinus (strain AS9601) protein is ATP synthase subunit b.